The following is a 1071-amino-acid chain: ATP-dependent helicase/deoxyribonuclease subunit B (1071 aa).

The protein belongs to the helicase family. AddB/RexB type 2 subfamily. As to quaternary structure, heterodimer of AddA and RexB. Requires Mg(2+) as cofactor.

Its function is as follows. The heterodimer acts as both an ATP-dependent DNA helicase and an ATP-dependent, dual-direction single-stranded exonuclease. Recognizes the chi site generating a DNA molecule suitable for the initiation of homologous recombination. This subunit has 5' -&gt; 3' nuclease activity but not helicase activity. This Streptococcus pyogenes serotype M12 (strain MGAS9429) protein is ATP-dependent helicase/deoxyribonuclease subunit B.